The following is an 847-amino-acid chain: Zinc transporter ZIP10 (847 aa).

An N-terminal signal peptide occupies residues 1-26 (MMRVHTHTRLCFLCVLTLLYHQCSHC). Residues 136–374 (GRHSHSAGHP…RREVPGSPAH (239 aa)) form a disordered region. Basic and acidic residues predominate over residues 162–171 (HHENEEHTLA). Over residues 179 to 188 (TLGTGATPPS) the composition is skewed to polar residues. The span at 190–269 (SEEHDHDHEH…QEHNDLSDQN (80 aa)) shows a compositional bias: basic and acidic residues. Composition is skewed to basic residues over residues 270 to 285 (HHHH…HPHL) and 314 to 330 (TRRH…RGRN). Asn385 carries an N-linked (GlcNAc...) asparagine glycan. 3 consecutive transmembrane segments (helical) span residues 447–467 (FVSI…VPIL), 474–494 (FLLT…ALLH), and 529–549 (GLTA…IGMF). The segment at 613–676 (ELQPLDSPSK…HSHHGHCHSD (64 aa)) is disordered. Residues 629-646 (DSDHPYEAPVKTEEDNVP) show a composition bias toward basic and acidic residues. Positions 648–672 (AKSKKHGHGHGHGHGHGHGHSHHGH) are enriched in basic residues. A run of 4 helical transmembrane segments spans residues 705-725 (AIGA…VAVF), 750-770 (IVYN…GTAV), 779-799 (SWIF…DMLP), and 817-837 (FVLQ…IAIF).

It belongs to the ZIP transporter (TC 2.A.5) family. Post-translationally, undergoes N-terminal ectodomain shedding.

It is found in the cell membrane. Its subcellular location is the apical cell membrane. It carries out the reaction Zn(2+)(in) = Zn(2+)(out). Its function is as follows. Zinc-influx transporter. When associated with slc39a6, the heterodimer slc39a10/slc39a6 has a functional role in epithelial-mesenchymal transition (EMT) during embryonic development. Slc39a10/slc39a6 heterodimers play also an essentiel role in initiating mitosis by importing zinc into cells to initiate a pathway resulting in the onset of mitosis. When associated with slc39a6, the heterodimer controls Ncam1 phosphorylation and integration into focal adhesion complexes during EMT. In Danio rerio (Zebrafish), this protein is Zinc transporter ZIP10.